Here is a 318-residue protein sequence, read N- to C-terminus: MNRFTRYDVTPEVIFNQRRQIIKAMGLGAAALSLPNIGFAAEKSDQLKALNFKDAPKGDFLLTPENKVTGYNNFYEFGVDKASPAKFAKDFKTDPWSLEIAGEVENPFVLNHAQLFNTFPLEERIYRFRCVEAWSMVIPWVGFELARLVEMAKPTSKAKFVIFHTLHDPEQMPGQKNKFFGGGIDYPYVEALTIEEAMNPLTLLSVGLYGKMLPPQNGAPIRLVVPWKYGFKSIKSIVKITFSETRPRTTWEKLAPHEYGFYANVNPNVDHPRWSQASERVIGSGGLLAVKRQDTLMFNGYEKEVAHLYKGLDLKVNF.

A signal peptide (tat-type signal) is located at residues 1 to 40 (MNRFTRYDVTPEVIFNQRRQIIKAMGLGAAALSLPNIGFA). Mo-molybdopterin contacts are provided by residues N72, 75-76 (YE), C130, T165, N217, R222, and 233-235 (SIK).

The protein belongs to the MsrP family. In terms of assembly, heterodimer of a catalytic subunit (MsrP) and a heme-binding subunit (MsrQ). Requires Mo-molybdopterin as cofactor. Post-translationally, predicted to be exported by the Tat system. The position of the signal peptide cleavage has not been experimentally proven.

The protein resides in the periplasm. The catalysed reaction is L-methionyl-[protein] + a quinone + H2O = L-methionyl-(S)-S-oxide-[protein] + a quinol. The enzyme catalyses L-methionyl-[protein] + a quinone + H2O = L-methionyl-(R)-S-oxide-[protein] + a quinol. Functionally, part of the MsrPQ system that repairs oxidized periplasmic proteins containing methionine sulfoxide residues (Met-O), using respiratory chain electrons. Thus protects these proteins from oxidative-stress damage caused by reactive species of oxygen and chlorine generated by the host defense mechanisms. MsrPQ is essential for the maintenance of envelope integrity under bleach stress, rescuing a wide series of structurally unrelated periplasmic proteins from methionine oxidation. The catalytic subunit MsrP is non-stereospecific, being able to reduce both (R-) and (S-) diastereoisomers of methionine sulfoxide. This Actinobacillus pleuropneumoniae serotype 3 (strain JL03) protein is Protein-methionine-sulfoxide reductase catalytic subunit MsrP.